We begin with the raw amino-acid sequence, 266 residues long: Imidazole glycerol phosphate synthase subunit HisF (266 aa).

Residues Asp11 and Asp130 contribute to the active site. Positions 134–157 (RTPEEAARPGPDGAPRGEGWDVYS) are disordered.

Belongs to the HisA/HisF family. As to quaternary structure, heterodimer of HisH and HisF.

The protein resides in the cytoplasm. The catalysed reaction is 5-[(5-phospho-1-deoxy-D-ribulos-1-ylimino)methylamino]-1-(5-phospho-beta-D-ribosyl)imidazole-4-carboxamide + L-glutamine = D-erythro-1-(imidazol-4-yl)glycerol 3-phosphate + 5-amino-1-(5-phospho-beta-D-ribosyl)imidazole-4-carboxamide + L-glutamate + H(+). Its pathway is amino-acid biosynthesis; L-histidine biosynthesis; L-histidine from 5-phospho-alpha-D-ribose 1-diphosphate: step 5/9. IGPS catalyzes the conversion of PRFAR and glutamine to IGP, AICAR and glutamate. The HisF subunit catalyzes the cyclization activity that produces IGP and AICAR from PRFAR using the ammonia provided by the HisH subunit. The sequence is that of Imidazole glycerol phosphate synthase subunit HisF from Paracidovorax citrulli (strain AAC00-1) (Acidovorax citrulli).